The sequence spans 364 residues: Fructose-bisphosphate aldolase B (364 aa).

The residue at position 2 (alanine 2) is an N-acetylalanine. The residue at position 13 (lysine 13) is an N6-succinyllysine. The residue at position 36 (serine 36) is a Phosphoserine. Phosphothreonine is present on threonine 39. Residue arginine 43 coordinates beta-D-fructose 1,6-bisphosphate. Position 89 is a phosphoserine (serine 89). Threonine 119 carries the post-translational modification Phosphothreonine. Lysine 121 is modified (N6-succinyllysine). A Phosphoserine modification is found at serine 132. Glutamate 188 functions as the Proton acceptor in the catalytic mechanism. Lysine 230 acts as the Schiff-base intermediate with dihydroxyacetone-P in catalysis. Phosphoserine is present on residues serine 272, serine 276, serine 299, and serine 301. Residue serine 272–glycine 274 coordinates beta-D-fructose 1,6-bisphosphate. A beta-D-fructose 1,6-bisphosphate-binding site is contributed by arginine 304. Residue serine 309 is modified to Phosphoserine. Lysine 317 is modified (N6-succinyllysine).

It belongs to the class I fructose-bisphosphate aldolase family. In terms of assembly, homotetramer. Interacts with BBS1, BBS2, BBS4 and BBS7. Forms a ternary complex with G6PD and TP53; this interaction is direct.

Its subcellular location is the cytoplasm. The protein localises to the cytosol. The protein resides in the cytoskeleton. It is found in the microtubule organizing center. It localises to the centrosome. Its subcellular location is the centriolar satellite. The enzyme catalyses beta-D-fructose 1,6-bisphosphate = D-glyceraldehyde 3-phosphate + dihydroxyacetone phosphate. It catalyses the reaction beta-D-fructose 1-phosphate = D-glyceraldehyde + dihydroxyacetone phosphate. The protein operates within carbohydrate degradation; glycolysis; D-glyceraldehyde 3-phosphate and glycerone phosphate from D-glucose: step 4/4. Its pathway is carbohydrate biosynthesis; gluconeogenesis. It functions in the pathway carbohydrate metabolism; fructose metabolism. Catalyzes the aldol cleavage of fructose 1,6-biphosphate to form two triosephosphates dihydroxyacetone phosphate and D-glyceraldehyde 3-phosphate in glycolysis as well as the reverse stereospecific aldol addition reaction in gluconeogenesis. In fructolysis, metabolizes fructose 1-phosphate derived from the phosphorylation of dietary fructose by fructokinase into dihydroxyacetone phosphate and D-glyceraldehyde. Acts as an adapter independently of its enzymatic activity, exerts a tumor suppressor role by stabilizing the ternary complex with G6PD and TP53 to inhibit G6PD activity and keep oxidative pentose phosphate metabolism in check. This chain is Fructose-bisphosphate aldolase B (ALDOB), found in Oryctolagus cuniculus (Rabbit).